The chain runs to 364 residues: Polygalacturonase (364 aa).

The N-terminal stretch at 1–21 (MVAYALTSMLLSAGALVAAAP) is a signal peptide. A propeptide spanning residues 22 to 27 (SGLDAR) is cleaved from the precursor. Cysteine 30 and cysteine 45 are oxidised to a cystine. PbH1 repeat units follow at residues 158–188 (VTGL…DIGS), 189–210 (SSGI…AINS), 211–231 (GSDI…SIGS), 240–261 (VKGV…RIKT), 269–291 (VSDI…VIEQ), and 303–348 (TTGV…SITG). The active-site Proton donor is the aspartate 203. A disulfide bridge connects residues cysteine 205 and cysteine 221. Histidine 225 is an active-site residue. Residue asparagine 276 is glycosylated (N-linked (GlcNAc...) asparagine). Cysteine 331 and cysteine 336 are disulfide-bonded. N-linked (GlcNAc...) asparagine glycosylation occurs at asparagine 340. An intrachain disulfide couples cysteine 355 to cysteine 364.

It belongs to the glycosyl hydrolase 28 family.

Its subcellular location is the secreted. The enzyme catalyses (1,4-alpha-D-galacturonosyl)n+m + H2O = (1,4-alpha-D-galacturonosyl)n + (1,4-alpha-D-galacturonosyl)m.. Functionally, involved in maceration and soft-rotting of plant tissue. Hydrolyzes the 1,4-alpha glycosidic bonds of de-esterified pectate in the smooth region of the plant cell wall. This is Polygalacturonase (PGN1) from Cochliobolus carbonum (Maize leaf spot fungus).